Reading from the N-terminus, the 555-residue chain is MTRYIFITGGVVSSLGKGITSASLGAILEAQGLTVTLLKLDPYINVDPGTMSPFQHGEVFVTEDGAETDLDLGHYERFVNATMTRKNNFTTGRVYADVIRKERRGDYLGGTIQVIPHITDEIKAKIREGADGADVALVEVGGTVGDIESLPFLEAIRQMRIELGDQQTLFIHLTLVPYVAVAGEIKTKPTQHSVKELRSIGIQPDILVCRSEQPLPDAERAKIALFTNVPEPSVISLSDVKSIYEIPLILRDQGLGNRVCEKLNIKATAADLDDWKKVVQAQKNPRHTVTVAVVGKYVDLEDSYKSLSEALIHAGIHTQTRVVIEYIDSEAIELHGTELLKKVDAILVPGGFGSRGIEGKILAAQYARENGIPYLGICLGMQIAIIEFARHKAQMENANSTEFDPKTPFPVVALVSEWMAKEGIIEKRKWGDDLGGTMRLGGQPCRLKIDSLARRLYGEDRVIERHRHRYEVNNDLIGELEKKGLVISGRSIDDRLVEMIELADHPWFVGCQFHPEFTSTPRKGHPLFIGFIKAGLAAKEAKKAVLAAPSQEKTD.

Positions 1–265 (MTRYIFITGG…GNRVCEKLNI (265 aa)) are amidoligase domain. Ser-13 contributes to the CTP binding site. Ser-13 provides a ligand contact to UTP. ATP is bound by residues 14–19 (SLGKGI) and Asp-71. Residues Asp-71 and Glu-139 each contribute to the Mg(2+) site. Residues 146 to 148 (DIE), 186 to 191 (KTKPTQ), and Lys-222 each bind CTP. Residues 186–191 (KTKPTQ) and Lys-222 contribute to the UTP site. Residues 290–541 (TVAVVGKYVD…IKAGLAAKEA (252 aa)) form the Glutamine amidotransferase type-1 domain. Gly-351 contacts L-glutamine. The Nucleophile; for glutamine hydrolysis role is filled by Cys-378. L-glutamine is bound by residues 379–382 (LGMQ), Glu-402, and Arg-469. Catalysis depends on residues His-514 and Glu-516.

This sequence belongs to the CTP synthase family. As to quaternary structure, homotetramer.

The catalysed reaction is UTP + L-glutamine + ATP + H2O = CTP + L-glutamate + ADP + phosphate + 2 H(+). It carries out the reaction L-glutamine + H2O = L-glutamate + NH4(+). It catalyses the reaction UTP + NH4(+) + ATP = CTP + ADP + phosphate + 2 H(+). Its pathway is pyrimidine metabolism; CTP biosynthesis via de novo pathway; CTP from UDP: step 2/2. With respect to regulation, allosterically activated by GTP, when glutamine is the substrate; GTP has no effect on the reaction when ammonia is the substrate. The allosteric effector GTP functions by stabilizing the protein conformation that binds the tetrahedral intermediate(s) formed during glutamine hydrolysis. Inhibited by the product CTP, via allosteric rather than competitive inhibition. Its function is as follows. Catalyzes the ATP-dependent amination of UTP to CTP with either L-glutamine or ammonia as the source of nitrogen. Regulates intracellular CTP levels through interactions with the four ribonucleotide triphosphates. This Coxiella burnetii (strain CbuK_Q154) (Coxiella burnetii (strain Q154)) protein is CTP synthase.